The following is a 1284-amino-acid chain: DNA topoisomerase 2, mitochondrial (1284 aa).

A mitochondrion-targeting transit peptide spans 1 to 35 (MSKLLNNNNHKNLTNYLKFGKGIINNLNNKSKQVG). ATP contacts are provided by residues N183, N212, 240–242 (GSN), and 253–260 (GRNGFGAK). The interaction with DNA stretch occupies residues 445–447 (KKK). 478-480 (QSK) serves as a coordination point for ATP. A Toprim domain is found at 560–677 (CTLIITEGDS…NLLKRGFLVE (118 aa)). The Mg(2+) site is built by E566, D646, and D648. Positions 810–1232 (IPSLIDGLKP…DPKSLWTADL (423 aa)) constitute a Topo IIA-type catalytic domain. Catalysis depends on Y900, which acts as the O-(5'-phospho-DNA)-tyrosine intermediate. The interval 1245 to 1284 (EFQKKPLKTSSSSSFDVSSSSESAKLSSTRKSKTDKIKSK) is disordered. Residues 1254-1271 (SSSSSFDVSSSSESAKLS) are compositionally biased toward low complexity.

It belongs to the type II topoisomerase family. As to quaternary structure, homodimer. Mg(2+) is required as a cofactor. The cofactor is Mn(2+). Requires Ca(2+) as cofactor.

It is found in the mitochondrion. The catalysed reaction is ATP-dependent breakage, passage and rejoining of double-stranded DNA.. Its function is as follows. Control of topological states of DNA by transient breakage and subsequent rejoining of DNA strands. Topoisomerase II makes double-strand breaks. This chain is DNA topoisomerase 2, mitochondrial (top2mt), found in Dictyostelium discoideum (Social amoeba).